A 509-amino-acid polypeptide reads, in one-letter code: MFS transporter fsdG (509 aa).

Residues N8 and N26 are each glycosylated (N-linked (GlcNAc...) asparagine). The next 4 membrane-spanning stretches (helical) occupy residues 63–83 (FLIH…ATTM), 103–123 (IALT…VTSP), 139–159 (IFFL…MFIA), and 162–182 (FLAG…IADF). N189 carries N-linked (GlcNAc...) asparagine glycosylation. 4 helical membrane-spanning segments follow: residues 195–215 (LFAL…GFVA), 222–242 (WTFR…CIFL), 298–318 (LIFL…FGLI), and 341–361 (GLSY…FNFI). N-linked (GlcNAc...) asparagine glycosylation occurs at N367. The next 4 helical transmembrane spans lie at 380–400 (YLPL…WYGW), 408–428 (WVVP…IIMP), 442–462 (AASV…FLPL), and 474–494 (GWGN…PAIF).

Belongs to the major facilitator superfamily.

The protein resides in the cell membrane. Efflux pump that might be required for efficient secretion of fusaridione A or other secondary metabolies produced by the fusaridione A gene cluster. The sequence is that of MFS transporter fsdG from Fusarium heterosporum.